Here is a 242-residue protein sequence, read N- to C-terminus: Adapter protein MecA (242 aa).

The protein belongs to the MecA family. Homodimer.

Its function is as follows. Enables the recognition and targeting of unfolded and aggregated proteins to the ClpC protease or to other proteins involved in proteolysis. This is Adapter protein MecA from Streptococcus gordonii (strain Challis / ATCC 35105 / BCRC 15272 / CH1 / DL1 / V288).